A 371-amino-acid polypeptide reads, in one-letter code: Carlactonoate CLA methyltransferase (371 aa).

Y21 is a binding site for S-adenosyl-L-homocysteine. Q28 is a binding site for (11R)-carlactonoate. Residues C62, N67, D101, L102, S141, and F142 each coordinate S-adenosyl-L-homocysteine. (11R)-carlactonoate contacts are provided by H162 and W163. Mg(2+) is bound by residues N180, D266, Y268, and D269.

The protein belongs to the methyltransferase superfamily. Type-7 methyltransferase family. SABATH subfamily. As to quaternary structure, homodimer. Mg(2+) is required as a cofactor.

It carries out the reaction (11R)-carlactonoate + S-adenosyl-L-methionine = (11R)-methyl carlactonoate + S-adenosyl-L-homocysteine. Its function is as follows. Methyltransferase involved in the biosynthesis of strigolactone natural products, bioactive compounds promoting plant fitness and soil microbe interactions, but preventing shoot branching. Catalyzes the biosynthesis of (11R)-methyl carlactonoate (MeCLA) from (11R)-carlactonoate (CLA), downstream of MAX1; MeCLA is probably biologically active as a hormone regulating shoot branching and serves as a precursor of non-canonical strigolactones (SLs). The sequence is that of Carlactonoate CLA methyltransferase from Arabidopsis thaliana (Mouse-ear cress).